We begin with the raw amino-acid sequence, 137 residues long: Small ribosomal subunit protein uS13 (137 aa).

Positions 114 to 137 (VTQKNARTRKGPRKTIMAKKDKGK) are disordered. Positions 119-130 (ARTRKGPRKTIM) are enriched in basic residues.

The protein belongs to the universal ribosomal protein uS13 family. Part of the 30S ribosomal subunit. Forms a loose heterodimer with protein S19. Forms two bridges to the 50S subunit in the 70S ribosome.

In terms of biological role, located at the top of the head of the 30S subunit, it contacts several helices of the 16S rRNA. In the 70S ribosome it contacts the 23S rRNA (bridge B1a) and protein L5 of the 50S subunit (bridge B1b), connecting the 2 subunits; these bridges are implicated in subunit movement. Contacts the tRNAs in the A and P-sites. This Mesomycoplasma hyopneumoniae (strain 232) (Mycoplasma hyopneumoniae) protein is Small ribosomal subunit protein uS13.